The sequence spans 130 residues: Small ribosomal subunit protein uS8 (130 aa).

The protein belongs to the universal ribosomal protein uS8 family. In terms of assembly, part of the 30S ribosomal subunit. Contacts proteins S5 and S12.

One of the primary rRNA binding proteins, it binds directly to 16S rRNA central domain where it helps coordinate assembly of the platform of the 30S subunit. This is Small ribosomal subunit protein uS8 from Marinobacter nauticus (strain ATCC 700491 / DSM 11845 / VT8) (Marinobacter aquaeolei).